Consider the following 100-residue polypeptide: Large ribosomal subunit protein uL23 (100 aa).

Belongs to the universal ribosomal protein uL23 family. Part of the 50S ribosomal subunit. Contacts protein L29, and trigger factor when it is bound to the ribosome.

Functionally, one of the early assembly proteins it binds 23S rRNA. One of the proteins that surrounds the polypeptide exit tunnel on the outside of the ribosome. Forms the main docking site for trigger factor binding to the ribosome. This is Large ribosomal subunit protein uL23 from Shewanella amazonensis (strain ATCC BAA-1098 / SB2B).